Here is an 87-residue protein sequence, read N- to C-terminus: Toxin Cll5c (87 aa).

A signal peptide spans 1-19 (MNSLLMITACLVLFGTVWA). The region spanning 20 to 85 (KEGYLVNKST…TYPLPNKSCS (66 aa)) is the LCN-type CS-alpha/beta domain. Cystine bridges form between cysteine 31/cysteine 84, cysteine 35/cysteine 60, cysteine 44/cysteine 65, and cysteine 48/cysteine 67. Residues 86–87 (KK) constitute a propeptide, removed by a carboxypeptidase.

The protein belongs to the long (4 C-C) scorpion toxin superfamily. Sodium channel inhibitor family. Beta subfamily. As to expression, expressed by the venom gland.

It localises to the secreted. Its function is as follows. Beta toxins bind voltage-independently at site-4 of sodium channels (Nav) and shift the voltage of activation toward more negative potentials thereby affecting sodium channel activation and promoting spontaneous and repetitive firing. This chain is Toxin Cll5c, found in Centruroides limpidus (Mexican scorpion).